The primary structure comprises 243 residues: UPF0246 protein Spy49_1742 (243 aa).

It belongs to the UPF0246 family.

This Streptococcus pyogenes serotype M49 (strain NZ131) protein is UPF0246 protein Spy49_1742.